We begin with the raw amino-acid sequence, 307 residues long: Cytidine deaminase 7 (307 aa).

CMP/dCMP-type deaminase domains follow at residues Thr22 to Asp155 and Ser185 to Glu307. Asn63–Glu65 lines the substrate pocket. His76 provides a ligand contact to Zn(2+). The active-site Proton donor is Glu78. Zn(2+) contacts are provided by Cys111 and Cys114.

Belongs to the cytidine and deoxycytidylate deaminase family. Homodimer. Zn(2+) serves as cofactor.

It catalyses the reaction cytidine + H2O + H(+) = uridine + NH4(+). The catalysed reaction is 2'-deoxycytidine + H2O + H(+) = 2'-deoxyuridine + NH4(+). Its function is as follows. This enzyme scavenges exogenous and endogenous cytidine and 2'-deoxycytidine for UMP synthesis. The polypeptide is Cytidine deaminase 7 (CDA7) (Arabidopsis thaliana (Mouse-ear cress)).